An 835-amino-acid polypeptide reads, in one-letter code: Cap-specific mRNA (nucleoside-2'-O-)-methyltransferase 1 (835 aa).

Positions 1–66 are disordered; sequence MKRRNDSECT…TEGKQRSSDS (66 aa). The Bipartite nuclear localization signal signature appears at 2-19; sequence KRRNDSECTAPLKKQKKR. Ser-28, Ser-31, Ser-53, Ser-66, and Ser-91 each carry phosphoserine. The span at 57-66 shows a compositional bias: basic and acidic residues; sequence TEGKQRSSDS. One can recognise a G-patch domain in the interval 87–133; the sequence is YNSVSQKLMAKMGFKEGEGLGKYSQGRKDIVEASNQKGRRGLGLTLQ. Lys-108 carries the post-translational modification N6-acetyllysine. Residues 203–207 and Arg-218 contribute to the substrate site; that span reads KSVFD. The RrmJ-type SAM-dependent 2'-O-MTase domain maps to 231–450; it reads FFLNRAAMKM…ERYVVCKGLK (220 aa). Asn-234 provides a ligand contact to S-adenosyl-L-methionine. The active site involves Lys-239. S-adenosyl-L-methionine is bound by residues 277-283 and 335-336; these read CAGPGGF and DI. Asp-364 is a catalytic residue. 374-376 is a substrate binding site; it reads NLQ. Lys-404 functions as the Proton acceptor in the catalytic mechanism. Asn-439 contacts substrate. Positions 727-835 are interaction with POLR2A; it reads SSGTPKLSYT…VLSFIQTHSA (109 aa). The 35-residue stretch at 752-786 folds into the WW domain; sequence RTVNEPWTMGFSKSFKRKFFYNKKTKNSTFDLPAD.

In terms of assembly, interacts with POLR2A (via C-terminus).

The protein resides in the nucleus. The enzyme catalyses a 5'-end (N(7)-methyl 5'-triphosphoguanosine)-ribonucleoside in mRNA + S-adenosyl-L-methionine = a 5'-end (N(7)-methyl 5'-triphosphoguanosine)-(2'-O-methyl-ribonucleoside) in mRNA + S-adenosyl-L-homocysteine + H(+). In terms of biological role, S-adenosyl-L-methionine-dependent methyltransferase that mediates mRNA cap1 2'-O-ribose methylation to the 5'-cap structure of mRNAs. Methylates the ribose of the first nucleotide of a m(7)GpppG-capped mRNA and small nuclear RNA (snRNA) to produce m(7)GpppRm (cap1). Displays a preference for cap0 transcripts. Cap1 modification is linked to higher levels of translation. May be involved in the interferon response pathway. This chain is Cap-specific mRNA (nucleoside-2'-O-)-methyltransferase 1 (CMTR1), found in Bos taurus (Bovine).